A 37-amino-acid polypeptide reads, in one-letter code: Potassium channel toxin alpha-KTx 2.14 (37 aa).

3 disulfides stabilise this stretch: Cys7–Cys28, Cys13–Cys33, and Cys17–Cys35.

Belongs to the short scorpion toxin superfamily. Potassium channel inhibitor family. Alpha-KTx 02 subfamily. As to expression, expressed by the venom gland.

The protein resides in the secreted. In terms of biological role, reversibly blocks hKv1.1/KCNA1 (50% inhibition of current at 1 uM). Seems not to be voltage-dependent. The protein is Potassium channel toxin alpha-KTx 2.14 of Heteroctenus garridoi (Cuban scorpion).